Reading from the N-terminus, the 288-residue chain is Elongation factor Ts (288 aa).

Residues 82–85 form an involved in Mg(2+) ion dislocation from EF-Tu region; that stretch reads TDFV.

Belongs to the EF-Ts family.

Its subcellular location is the cytoplasm. Its function is as follows. Associates with the EF-Tu.GDP complex and induces the exchange of GDP to GTP. It remains bound to the aminoacyl-tRNA.EF-Tu.GTP complex up to the GTP hydrolysis stage on the ribosome. The polypeptide is Elongation factor Ts (Chlorobaculum parvum (strain DSM 263 / NCIMB 8327) (Chlorobium vibrioforme subsp. thiosulfatophilum)).